A 268-amino-acid polypeptide reads, in one-letter code: Tryptophan synthase alpha chain (268 aa).

Catalysis depends on proton acceptor residues Glu-49 and Asp-60.

This sequence belongs to the TrpA family. Tetramer of two alpha and two beta chains.

The enzyme catalyses (1S,2R)-1-C-(indol-3-yl)glycerol 3-phosphate + L-serine = D-glyceraldehyde 3-phosphate + L-tryptophan + H2O. Its pathway is amino-acid biosynthesis; L-tryptophan biosynthesis; L-tryptophan from chorismate: step 5/5. In terms of biological role, the alpha subunit is responsible for the aldol cleavage of indoleglycerol phosphate to indole and glyceraldehyde 3-phosphate. The protein is Tryptophan synthase alpha chain of Vibrio parahaemolyticus serotype O3:K6 (strain RIMD 2210633).